Reading from the N-terminus, the 311-residue chain is Putative protease MJ0651 (311 aa).

Residue Ser128 is the Nucleophile of the active site. Catalysis depends on Lys180, which acts as the Proton donor/acceptor.

This sequence belongs to the peptidase S49 family.

This chain is Putative protease MJ0651, found in Methanocaldococcus jannaschii (strain ATCC 43067 / DSM 2661 / JAL-1 / JCM 10045 / NBRC 100440) (Methanococcus jannaschii).